The sequence spans 404 residues: GID complex subunit 9 (404 aa).

Residues 116–148 (SRVRLNRLVADYMMANGYHGAAALLCKDSQLEN) form the LisH domain. The 58-residue stretch at 154 to 211 (IYKRYQLIHDSILQQELKEVLSWCSEHRAILKKNNSTLELEVRLQRFIELIKSKKLCQ) folds into the CTLH domain. An RING-Gid-type zinc finger spans residues 317–389 (CPVCTPCLND…REGFLRDPYS (73 aa)).

The protein belongs to the FYV10 family. Identified in the GID/CTLH complex. In the absence of stress, the complex exists as an inactive anticipatory complex (GID(Ant)), composed of Gid1, the E3 ubiquitin-ligase Gid2, Gid5, Gid8, and the RING-like subunit Gid9, awaiting a substrate receptor to form the active E3 ligase complex. When cells are shifted to glucose-containing medium, the substrate receptor Gid4 is induced and becomes part of the complex, named GID(SR4). Additionally, Gid7 transforms the GID(SR4) E3 ligase core into a higher-order supramolecular assembly (Chelator-GID(SR4)). Under osmotic or heat stress, the substrate receptor Gid10 is induced and becomes part of the complex, named GID(SR10).

The protein localises to the cytoplasm. Its subcellular location is the nucleus. The catalysed reaction is S-ubiquitinyl-[E2 ubiquitin-conjugating enzyme]-L-cysteine + [acceptor protein]-L-lysine = [E2 ubiquitin-conjugating enzyme]-L-cysteine + N(6)-ubiquitinyl-[acceptor protein]-L-lysine.. The protein operates within protein modification; protein ubiquitination. In terms of biological role, component of the GID E3 ligase complex recruiting N termini and catalyzing ubiquitination of proteins targeted for degradation. GID E3 is regulated through assembly with interchangeable N-degron-binding substrate receptors induced by distinct environmental perturbations. Required for the adaptation to the presence of glucose in the growth medium; mediates in association with the substrate receptor VID24/GID4 the degradation of enzymes involved in gluconeogenesis when cells are shifted to glucose-containing medium. This Schizosaccharomyces pombe (strain 972 / ATCC 24843) (Fission yeast) protein is GID complex subunit 9 (gid9).